The sequence spans 397 residues: 2,3-bisphosphoglycerate-independent phosphoglycerate mutase (397 aa).

Belongs to the BPG-independent phosphoglycerate mutase family. A-PGAM subfamily.

It catalyses the reaction (2R)-2-phosphoglycerate = (2R)-3-phosphoglycerate. The protein operates within carbohydrate degradation; glycolysis; pyruvate from D-glyceraldehyde 3-phosphate: step 3/5. In terms of biological role, catalyzes the interconversion of 2-phosphoglycerate and 3-phosphoglycerate. This Methanosarcina mazei (strain ATCC BAA-159 / DSM 3647 / Goe1 / Go1 / JCM 11833 / OCM 88) (Methanosarcina frisia) protein is 2,3-bisphosphoglycerate-independent phosphoglycerate mutase (apgM).